We begin with the raw amino-acid sequence, 329 residues long: Elongation factor Ts (329 aa).

The tract at residues 79–82 (TDFV) is involved in Mg(2+) ion dislocation from EF-Tu.

Belongs to the EF-Ts family.

The protein resides in the cytoplasm. Functionally, associates with the EF-Tu.GDP complex and induces the exchange of GDP to GTP. It remains bound to the aminoacyl-tRNA.EF-Tu.GTP complex up to the GTP hydrolysis stage on the ribosome. The chain is Elongation factor Ts from Phocaeicola vulgatus (strain ATCC 8482 / DSM 1447 / JCM 5826 / CCUG 4940 / NBRC 14291 / NCTC 11154) (Bacteroides vulgatus).